The primary structure comprises 48 residues: Piguamerin (48 aa).

5 cysteine pairs are disulfide-bonded: cysteine 3/cysteine 14, cysteine 8/cysteine 19, cysteine 21/cysteine 41, cysteine 26/cysteine 45, and cysteine 30/cysteine 47. The Antistasin-like domain occupies 19–47 (CVCVIGQCRKYCPNGFKKDENGCTFPCTC).

It belongs to the protease inhibitor I15 (antistasin) family.

It localises to the secreted. Functionally, inhibits plasma and tissue kallikrein, and trypsin. May be involved in leech hematophagia. The sequence is that of Piguamerin from Hirudo nipponia (Korean blood-sucking leech).